A 496-amino-acid polypeptide reads, in one-letter code: Ribose import ATP-binding protein RbsA (496 aa).

ABC transporter domains follow at residues 5 to 241 (LQMK…VGRE) and 252 to 496 (SPGE…VGGE). Residue 37-44 (GENGAGKS) participates in ATP binding.

Belongs to the ABC transporter superfamily. Ribose importer (TC 3.A.1.2.1) family. The complex is composed of an ATP-binding protein (RbsA), two transmembrane proteins (RbsC) and a solute-binding protein (RbsB).

It is found in the cell membrane. It catalyses the reaction D-ribose(out) + ATP + H2O = D-ribose(in) + ADP + phosphate + H(+). Its function is as follows. Part of the ABC transporter complex RbsABC involved in ribose import. Responsible for energy coupling to the transport system. This Caldanaerobacter subterraneus subsp. tengcongensis (strain DSM 15242 / JCM 11007 / NBRC 100824 / MB4) (Thermoanaerobacter tengcongensis) protein is Ribose import ATP-binding protein RbsA.